A 310-amino-acid polypeptide reads, in one-letter code: Porphobilinogen deaminase (310 aa).

The residue at position 242 (Cys242) is an S-(dipyrrolylmethanemethyl)cysteine.

It belongs to the HMBS family. In terms of assembly, monomer. Dipyrromethane is required as a cofactor.

The enzyme catalyses 4 porphobilinogen + H2O = hydroxymethylbilane + 4 NH4(+). Its pathway is porphyrin-containing compound metabolism; protoporphyrin-IX biosynthesis; coproporphyrinogen-III from 5-aminolevulinate: step 2/4. Functionally, tetrapolymerization of the monopyrrole PBG into the hydroxymethylbilane pre-uroporphyrinogen in several discrete steps. The sequence is that of Porphobilinogen deaminase from Shewanella baltica (strain OS155 / ATCC BAA-1091).